A 443-amino-acid chain; its full sequence is Tryptophan synthase beta chain (443 aa).

Lysine 110 bears the N6-(pyridoxal phosphate)lysine mark.

Belongs to the TrpB family. In terms of assembly, tetramer of two alpha and two beta chains. Pyridoxal 5'-phosphate is required as a cofactor.

The enzyme catalyses (1S,2R)-1-C-(indol-3-yl)glycerol 3-phosphate + L-serine = D-glyceraldehyde 3-phosphate + L-tryptophan + H2O. It participates in amino-acid biosynthesis; L-tryptophan biosynthesis; L-tryptophan from chorismate: step 5/5. Its function is as follows. The beta subunit is responsible for the synthesis of L-tryptophan from indole and L-serine. This Thermococcus onnurineus (strain NA1) protein is Tryptophan synthase beta chain.